The chain runs to 229 residues: Transcriptional activator protein YukR (229 aa).

The region spanning 157–222 is the HTH luxR-type domain; sequence DTSGKGILSP…QAIRLGVELE (66 aa). Positions 181 to 200 form a DNA-binding region, H-T-H motif; sequence YPEIALIAGITTRTVKHHMG.

It belongs to the autoinducer-regulated transcriptional regulatory protein family.

Probable transcriptional activator. Binds to an autoinducer molecule. This Yersinia ruckeri protein is Transcriptional activator protein YukR (yukR).